The primary structure comprises 1411 residues: Protein three rows (1411 aa).

Residues 1065-1071 (VEPIRKQ) form a separase cleavage-site region. Disordered stretches follow at residues 1221–1240 (LEPP…NISP), 1268–1301 (VRPA…KSPK), and 1330–1411 (AKST…RHRN). Low complexity-rich tracts occupy residues 1270 to 1289 (PASS…NASS) and 1386 to 1398 (TAEQ…TATP).

In terms of assembly, interacts with pim and Sse. Cleavage of thr contributes to inactivation of Sse.

The protein localises to the cytoplasm. Required specifically for chromosome disjunction during all mitoses; maternally provided protein is sufficient until mitosis 14 then zygotic protein is required. Involved in formation and/or maintenance of epithelial structures: bud extension during Malpighian tubule development, and foregut and hindgut morphogenesis. The polypeptide is Protein three rows (thr) (Drosophila virilis (Fruit fly)).